The chain runs to 736 residues: Elongation factor 2 (736 aa).

The 244-residue stretch at 19 to 262 (DQIRNIGIIA…MVIKFVPNPR (244 aa)) folds into the tr-type G domain. Residues 28–35 (AHVDHGKT), 94–98 (DTPGH), and 148–151 (NKVD) each bind GTP. H602 carries the post-translational modification Diphthamide.

This sequence belongs to the TRAFAC class translation factor GTPase superfamily. Classic translation factor GTPase family. EF-G/EF-2 subfamily.

The protein resides in the cytoplasm. Its function is as follows. Catalyzes the GTP-dependent ribosomal translocation step during translation elongation. During this step, the ribosome changes from the pre-translocational (PRE) to the post-translocational (POST) state as the newly formed A-site-bound peptidyl-tRNA and P-site-bound deacylated tRNA move to the P and E sites, respectively. Catalyzes the coordinated movement of the two tRNA molecules, the mRNA and conformational changes in the ribosome. The sequence is that of Elongation factor 2 (fusA) from Aeropyrum pernix (strain ATCC 700893 / DSM 11879 / JCM 9820 / NBRC 100138 / K1).